The following is a 256-amino-acid chain: Spheroidene monooxygenase (256 aa).

Residues 1–23 show a composition bias toward low complexity; it reads MTNELSNAAGASQQGPAASSFSA. A disordered region spans residues 1–26; it reads MTNELSNAAGASQQGPAASSFSADTP.

This sequence belongs to the CrtA family. Heme is required as a cofactor.

The enzyme catalyses spheroidene + 4 reduced [2Fe-2S]-[ferredoxin] + 2 O2 + 4 H(+) = spheroiden-2-one + 4 oxidized [2Fe-2S]-[ferredoxin] + 3 H2O. It catalyses the reaction spirilloxanthin + 4 reduced [2Fe-2S]-[ferredoxin] + 2 O2 + 4 H(+) = 2-oxospirilloxanthin + 4 oxidized [2Fe-2S]-[ferredoxin] + 3 H2O. The catalysed reaction is 2-oxospirilloxanthin + 4 reduced [2Fe-2S]-[ferredoxin] + 2 O2 + 4 H(+) = 2,2'-dioxospirilloxanthin + 4 oxidized [2Fe-2S]-[ferredoxin] + 3 H2O. It carries out the reaction spheroidene + 2 reduced [2Fe-2S]-[ferredoxin] + O2 + 2 H(+) = 2-hydroxyspheroidene + 2 oxidized [2Fe-2S]-[ferredoxin] + H2O. The enzyme catalyses 2-hydroxyspheroidene + 2 reduced [2Fe-2S]-[ferredoxin] + O2 + 2 H(+) = 2,2-dihydroxyspheroidene + 2 oxidized [2Fe-2S]-[ferredoxin] + H2O. It catalyses the reaction 2,2-dihydroxyspheroidene = spheroiden-2-one + H2O. The catalysed reaction is spirilloxanthin + 2 reduced [2Fe-2S]-[ferredoxin] + O2 + 2 H(+) = 2-hydroxyspirilloxanthin + 2 oxidized [2Fe-2S]-[ferredoxin] + H2O. It carries out the reaction 2-hydroxyspirilloxanthin + 2 reduced [2Fe-2S]-[ferredoxin] + O2 + 2 H(+) = 2,2-dihydroxyspirilloxanthin + 2 oxidized [2Fe-2S]-[ferredoxin] + H2O. The enzyme catalyses 2,2-dihydroxyspirilloxanthin = 2-oxospirilloxanthin + H2O. It catalyses the reaction 2-oxospirilloxanthin + 2 reduced [2Fe-2S]-[ferredoxin] + O2 + 2 H(+) = 2'-hydroxy-2-oxospirilloxanthin + 2 oxidized [2Fe-2S]-[ferredoxin] + H2O. The catalysed reaction is 2'-hydroxy-2-oxospirilloxanthin + 2 reduced [2Fe-2S]-[ferredoxin] + O2 + 2 H(+) = 2',2'-dihydroxy-2-oxospirilloxanthin + 2 oxidized [2Fe-2S]-[ferredoxin] + H2O. It carries out the reaction 2',2'-dihydroxy-2-oxospirilloxanthin = 2,2'-dioxospirilloxanthin + H2O. Its pathway is carotenoid biosynthesis; spheroidene biosynthesis. It functions in the pathway carotenoid biosynthesis; spirilloxanthin biosynthesis. In terms of biological role, involved in the biosynthesis of the carotenoids spheroidene and spirilloxanthin. Catalyzes the introduction of one keto group at the C-2 position of spheroidene and two keto groups at the C-2 and C-2' positions of spirilloxanthin. The sequence is that of Spheroidene monooxygenase from Rubrivivax gelatinosus (Rhodocyclus gelatinosus).